The sequence spans 109 residues: Oncomodulin (109 aa).

At Ser2 the chain carries N-acetylserine. EF-hand domains are found at residues 39 to 74 (MSAS…FESG) and 78 to 109 (LTES…MVHS). Ca(2+) contacts are provided by Asp52, Asp54, Ser56, Tyr58, Glu63, Asp91, Asp93, Asp95, Lys97, and Glu102.

Belongs to the parvalbumin family. As to expression, abundant in the organ of Corti.

Has some calmodulin-like activity with respect to enzyme activation and growth regulation. Binds two calcium ions. This is Oncomodulin (OCM) from Cavia porcellus (Guinea pig).